The chain runs to 391 residues: Ectodysplasin-A (391 aa).

Residues 1-21 are compositionally biased toward basic and acidic residues; sequence MGYPEVERREPLPAAAPRERG. A disordered region spans residues 1-28; the sequence is MGYPEVERREPLPAAAPRERGSQGCGCR. The Cytoplasmic segment spans residues 1 to 41; the sequence is MGYPEVERREPLPAAAPRERGSQGCGCRGAPARAGEGNSCR. A helical; Signal-anchor for type II membrane protein membrane pass occupies residues 42–62; sequence LFLGFFGLSLALHLLTLCCYL. The Extracellular segment spans residues 63–391; the sequence is ELRSELRRER…AIRLGEAPAS (329 aa). 2 disordered regions span residues 72 to 129 and 146 to 244; these read RGTE…DSQD and YSEE…TGTR. Residues 86–96 show a composition bias toward low complexity; sequence TSGTLSSPGSL. The 50-residue stretch at 180 to 229 folds into the Collagen-like domain; sequence GPPGPNGPPGPPGPPGPQGPPGIPGIPGIPGTTVMGPPGPPGPPGPQGPP. Pro residues-rich tracts occupy residues 181–203 and 216–228; these read PPGPNGPPGPPGPPGPQGPPGIP and PPGPPGPPGPQGP. A THD domain is found at 249–385; that stretch reads AVVHLQGQGS…HTTFFGAIRL (137 aa). Residue N313 is glycosylated (N-linked (GlcNAc...) asparagine). An intrachain disulfide couples C332 to C346. The N-linked (GlcNAc...) asparagine glycan is linked to N372.

It belongs to the tumor necrosis factor family. Homotrimer. The homotrimers may then dimerize and form higher-order oligomers. In terms of processing, N-glycosylated. Post-translationally, processing by furin produces a secreted form.

The protein localises to the cell membrane. It localises to the secreted. Its function is as follows. Cytokine which is involved in epithelial-mesenchymal signaling during morphogenesis of ectodermal organs. Functions as a ligand activating the DEATH-domain containing receptors EDAR and EDA2R. Isoform TAA binds only to the receptor EDAR, while isoform TA-A2 binds exclusively to the receptor EDA2R. May also play a role in cell adhesion. In terms of biological role, isoform TAA binds only to the receptor EDAR, while isoform TA-A2 binds exclusively to the receptor EDA2R. Isoform TA-A2 binds exclusively to the receptor EDA2R. This is Ectodysplasin-A (Eda) from Mus musculus (Mouse).